A 624-amino-acid chain; its full sequence is Probable potassium transport system protein Kup (624 aa).

The next 12 membrane-spanning stretches (helical) occupy residues L13–M33, I52–I72, W102–T122, P139–I159, L170–I190, F208–T228, W249–L269, M291–F311, I339–F359, A368–M388, T399–V419, and I421–T441.

It belongs to the HAK/KUP transporter (TC 2.A.72) family.

Its subcellular location is the cell inner membrane. The enzyme catalyses K(+)(in) + H(+)(in) = K(+)(out) + H(+)(out). Its function is as follows. Transport of potassium into the cell. Likely operates as a K(+):H(+) symporter. The chain is Probable potassium transport system protein Kup from Thiobacillus denitrificans (strain ATCC 25259 / T1).